Here is a 1067-residue protein sequence, read N- to C-terminus: Ubiquitin carboxyl-terminal hydrolase 26 (1067 aa).

A compositionally biased stretch (basic residues) spans 1-12; the sequence is MSRPNTRNKNKR. The interval 1-22 is disordered; it reads MSRPNTRNKNKRQRPDAVDSSS. Residues 106 to 442 enclose the USP domain; that stretch reads AGLTNLGATC…DAYMLMYSLR (337 aa). Catalysis depends on Cys115, which acts as the Nucleophile. The active-site Proton acceptor is His359. A disordered region spans residues 385 to 418; it reads KRPCNEASSSTPQSESNGTASSGNITDGIQSGSS. A compositionally biased stretch (polar residues) spans 390–418; that stretch reads EASSSTPQSESNGTASSGNITDGIQSGSS. 3 consecutive DUSP domains span residues 503–595, 610–711, and 738–861; these read NALT…GDYC, DSYR…DCTC, and TLKV…SAFI. The region spanning 948-1031 is the Ubiquitin-like domain; the sequence is FEVDRRTSKR…LWVRDTEMHE (84 aa).

The protein belongs to the peptidase C19 family. Expressed in seedlings, roots, stems, leaves and inflorescences.

Its subcellular location is the nucleus. The enzyme catalyses Thiol-dependent hydrolysis of ester, thioester, amide, peptide and isopeptide bonds formed by the C-terminal Gly of ubiquitin (a 76-residue protein attached to proteins as an intracellular targeting signal).. In terms of biological role, recognizes and hydrolyzes the peptide bond at the C-terminal Gly of ubiquitin. Involved in the processing of poly-ubiquitin precursors as well as that of ubiquitinated proteins. Deubiquitinates H2BK143ub1 of histone H2B. The chain is Ubiquitin carboxyl-terminal hydrolase 26 (UBP26) from Arabidopsis thaliana (Mouse-ear cress).